A 197-amino-acid chain; its full sequence is Potassium-transporting ATPase KdpC subunit (197 aa).

A helical transmembrane segment spans residues 7–27 (PAFISLILFTLLFGLIYPLTV).

This sequence belongs to the KdpC family. In terms of assembly, the system is composed of three essential subunits: KdpA, KdpB and KdpC.

Its subcellular location is the cell inner membrane. Its function is as follows. Part of the high-affinity ATP-driven potassium transport (or Kdp) system, which catalyzes the hydrolysis of ATP coupled with the electrogenic transport of potassium into the cytoplasm. This subunit acts as a catalytic chaperone that increases the ATP-binding affinity of the ATP-hydrolyzing subunit KdpB by the formation of a transient KdpB/KdpC/ATP ternary complex. This chain is Potassium-transporting ATPase KdpC subunit, found in Beijerinckia indica subsp. indica (strain ATCC 9039 / DSM 1715 / NCIMB 8712).